Consider the following 689-residue polypeptide: Translation initiation factor IF-2 (689 aa).

The disordered stretch occupies residues 41–109; the sequence is DYERVFGGGN…EAPAAEEREA (69 aa). Residues 61-70 are compositionally biased toward basic residues; that stretch reads RKGRQKKRRR. The span at 80–94 shows a compositional bias: low complexity; the sequence is RGPRAAAPSRPSRGR. The segment covering 96-109 has biased composition (basic and acidic residues); that stretch reads AAREEAPAAEEREA. A tr-type G domain is found at 192 to 361; it reads EKPPVITVMG…LVVAELEELR (170 aa). The segment at 201-208 is G1; that stretch reads GHVDHGKT. 201 to 208 provides a ligand contact to GTP; it reads GHVDHGKT. The interval 226–230 is G2; that stretch reads GITQH. Residues 247-250 are G3; that stretch reads DTPG. GTP contacts are provided by residues 247 to 251 and 301 to 304; these read DTPGH and NKID. Positions 301-304 are G4; that stretch reads NKID. Positions 337–339 are G5; sequence SAK.

This sequence belongs to the TRAFAC class translation factor GTPase superfamily. Classic translation factor GTPase family. IF-2 subfamily.

It is found in the cytoplasm. Its function is as follows. One of the essential components for the initiation of protein synthesis. Protects formylmethionyl-tRNA from spontaneous hydrolysis and promotes its binding to the 30S ribosomal subunits. Also involved in the hydrolysis of GTP during the formation of the 70S ribosomal complex. This chain is Translation initiation factor IF-2, found in Rubrobacter xylanophilus (strain DSM 9941 / JCM 11954 / NBRC 16129 / PRD-1).